Here is a 444-residue protein sequence, read N- to C-terminus: Protein cereblon (444 aa).

Residues 1-52 form a disordered region; the sequence is MAGEGDPEDAAHNMGNHLPLLPAEEEEEDEIEMEVEDQDNKEPKKPNIINFD. Residues 23–37 show a composition bias toward acidic residues; sequence AEEEEEDEIEMEVED. A Lon N-terminal domain is found at 80-321; that stretch reads CPVIPVLPQV…CELDIMNKCT (242 aa). One can recognise a CULT domain in the interval 320–428; sequence CTSLCCKQCQ…LTRSALLPTI (109 aa). Residues cysteine 325 and cysteine 328 each contribute to the Zn(2+) site. (S)-thalidomide contacts are provided by histidine 380, tryptophan 382, and tryptophan 388. Cysteine 393 and cysteine 396 together coordinate Zn(2+).

Belongs to the CRBN family. As to quaternary structure, component of a DCX (DDB1-CUL4-X-box) protein ligase complex, at least composed of CRBN, CUL4A, DDB1 and RBX1. Interacts directly with DDB1. Interacts with KCNT1. Interacts with ILF2. Interacts with TRAF6 and ECSIT. In terms of processing, ubiquitinated, ubiquitination is mediated by its own DCX protein ligase complex.

It localises to the cytoplasm. The protein localises to the nucleus. It is found in the membrane. It functions in the pathway protein modification; protein ubiquitination. Substrate recognition component of a DCX (DDB1-CUL4-X-box) E3 protein ligase complex that mediates the ubiquitination and subsequent proteasomal degradation of target proteins, such as MEIS2, ILF2 or GLUL. Normal degradation of key regulatory proteins is required for normal limb outgrowth and expression of the fibroblast growth factor FGF8. Maintains presynaptic glutamate release and consequently cognitive functions, such as memory and learning, by negatively regulating large-conductance calcium-activated potassium (BK) channels in excitatory neurons. Likely to function by regulating the assembly and neuronal surface expression of BK channels via its interaction with KCNT1. May also be involved in regulating anxiety-like behaviors via a BK channel-independent mechanism. Plays a negative role in TLR4 signaling by interacting with TRAF6 and ECSIT, leading to inhibition of ECSIT ubiquitination, an important step of the signaling. This is Protein cereblon (CRBN) from Bos taurus (Bovine).